The following is a 184-amino-acid chain: Oligoribonuclease (184 aa).

Residues 9–172 (LIWIDLEMTG…DDIRESIEEL (164 aa)) enclose the Exonuclease domain. Residue tyrosine 130 is part of the active site.

This sequence belongs to the oligoribonuclease family.

It localises to the cytoplasm. Its function is as follows. 3'-to-5' exoribonuclease specific for small oligoribonucleotides. This Actinobacillus pleuropneumoniae serotype 5b (strain L20) protein is Oligoribonuclease.